The chain runs to 431 residues: Probable pectate lyase 1 (431 aa).

A signal peptide spans 1 to 20; that stretch reads MAVLPTWLLAMMCLLFFVGA. 3 N-linked (GlcNAc...) asparagine glycosylation sites follow: N23, N28, and N65. Residues D227, D251, and D255 each contribute to the Ca(2+) site. Residue R307 is part of the active site.

It belongs to the polysaccharide lyase 1 family. Ca(2+) serves as cofactor. In terms of tissue distribution, expressed in flowers, but not in leaves.

It carries out the reaction Eliminative cleavage of (1-&gt;4)-alpha-D-galacturonan to give oligosaccharides with 4-deoxy-alpha-D-galact-4-enuronosyl groups at their non-reducing ends.. It participates in glycan metabolism; pectin degradation; 2-dehydro-3-deoxy-D-gluconate from pectin: step 2/5. In Arabidopsis thaliana (Mouse-ear cress), this protein is Probable pectate lyase 1.